Here is a 336-residue protein sequence, read N- to C-terminus: tRNA (guanine(37)-N(1))-methyltransferase Trm5b (336 aa).

S-adenosyl-L-methionine-binding positions include Arg-186, Asp-223–Ile-224, Asp-251–Val-252, and Asn-265.

Belongs to the class I-like SAM-binding methyltransferase superfamily. TRM5/TYW2 family. As to quaternary structure, monomer.

Its subcellular location is the cytoplasm. The catalysed reaction is guanosine(37) in tRNA + S-adenosyl-L-methionine = N(1)-methylguanosine(37) in tRNA + S-adenosyl-L-homocysteine + H(+). Specifically methylates the N1 position of guanosine-37 in various tRNAs. This chain is tRNA (guanine(37)-N(1))-methyltransferase Trm5b (trm5b), found in Methanocaldococcus jannaschii (strain ATCC 43067 / DSM 2661 / JAL-1 / JCM 10045 / NBRC 100440) (Methanococcus jannaschii).